A 404-amino-acid polypeptide reads, in one-letter code: Pyruvate-flavodoxin oxidoreductase (404 aa).

This sequence belongs to the pyruvate:ferredoxin/flavodoxin oxidoreductase family.

The catalysed reaction is oxidized [flavodoxin] + pyruvate + CoA + 2 H(+) = reduced [flavodoxin] + acetyl-CoA + CO2. Functionally, oxidoreductase required for the transfer of electrons from pyruvate to flavodoxin, which reduces nitrogenase. This Nostoc sp. (strain ATCC 29151 / PCC 7119) (Anabaena sp.) protein is Pyruvate-flavodoxin oxidoreductase (nifJ).